The chain runs to 583 residues: Bifunctional dihydrofolate reductase-thymidylate synthase (583 aa).

In terms of domain architecture, DHFR spans aspartate 9–lysine 229. Glycine 36–glycine 42 is an NADP(+) binding site. Aspartate 51 is a binding site for substrate. NADP(+) is bound by residues lysine 104–serine 106 and leucine 125–threonine 128. Residues isoleucine 165, tyrosine 171, and threonine 186 each coordinate substrate. Glycine 166–glutamate 173 is an NADP(+) binding site. A thymidylate synthase region spans residues histidine 298 to alanine 583. Residue arginine 320 participates in dUMP binding. Residue cysteine 465 is part of the active site. Residues histidine 466, glutamine 484–aspartate 488, asparagine 496, and histidine 526–tyrosine 528 contribute to the dUMP site.

It in the N-terminal section; belongs to the dihydrofolate reductase family. The protein in the C-terminal section; belongs to the thymidylate synthase family. As to quaternary structure, homodimer.

The enzyme catalyses (6S)-5,6,7,8-tetrahydrofolate + NADP(+) = 7,8-dihydrofolate + NADPH + H(+). It catalyses the reaction dUMP + (6R)-5,10-methylene-5,6,7,8-tetrahydrofolate = 7,8-dihydrofolate + dTMP. It participates in cofactor biosynthesis; tetrahydrofolate biosynthesis; 5,6,7,8-tetrahydrofolate from 7,8-dihydrofolate: step 1/1. Bifunctional enzyme. Involved in de novo dTMP biosynthesis. Key enzyme in folate metabolism. Catalyzes an essential reaction for de novo glycine and purine synthesis, DNA precursor synthesis, and for the conversion of dUMP to dTMP. The sequence is that of Bifunctional dihydrofolate reductase-thymidylate synthase from Plasmodium chabaudi.